Here is a 541-residue protein sequence, read N- to C-terminus: Chaperonin GroEL 1 (541 aa).

Residues 29–32, 86–90, G413, and D492 each bind ATP; these read TLGP and DGTTT.

Belongs to the chaperonin (HSP60) family. In terms of assembly, forms a cylinder of 14 subunits composed of two heptameric rings stacked back-to-back. Interacts with the co-chaperonin GroES.

It is found in the cytoplasm. It catalyses the reaction ATP + H2O + a folded polypeptide = ADP + phosphate + an unfolded polypeptide.. In terms of biological role, together with its co-chaperonin GroES, plays an essential role in assisting protein folding. The GroEL-GroES system forms a nano-cage that allows encapsulation of the non-native substrate proteins and provides a physical environment optimized to promote and accelerate protein folding. This is Chaperonin GroEL 1 from Rhodococcus jostii (strain RHA1).